The primary structure comprises 133 residues: Mitochondrial import inner membrane translocase subunit TIM17-3 (133 aa).

4 helical membrane passes run 15 to 35, 63 to 83, 90 to 105, and 115 to 128; these read IVNA…VYHF, GGTF…LVRI, WNSI…VLSI, and SAVM…VLNP.

Belongs to the Tim17/Tim22/Tim23 family. In terms of assembly, component of the TIM17:23 complex at least composed of TIM23, TIM17 and TIM50. The complex interacts with the TIM44 component of the PAM complex. In terms of tissue distribution, expressed in cotyledons, roots, flowers and leaves.

The protein resides in the mitochondrion inner membrane. Its function is as follows. Essential component of the TIM17:23 complex, a complex that mediates the translocation of transit peptide-containing proteins across the mitochondrial inner membrane. Links the inner and outer membranes. The polypeptide is Mitochondrial import inner membrane translocase subunit TIM17-3 (TIM17-3) (Arabidopsis thaliana (Mouse-ear cress)).